The sequence spans 433 residues: Succinate--CoA ligase [GDP-forming] subunit beta, mitochondrial (433 aa).

The N-terminal 38 residues, 1-38 (IPAAPVAAQARKLLRDLAFRPPLLAARSQVVQLTPRRW), are a transit peptide targeting the mitochondrion. The ATP-grasp domain maps to 47–275 (KKLMSDNGVK…NAEFRQKDIF (229 aa)). Gln-58 serves as a coordination point for GTP. Lys-74 is modified (N6-acetyllysine). Lys-79 is modified (N6-succinyllysine). 91 to 93 (GRG) serves as a coordination point for GTP. 2 positions are modified to N6-acetyllysine: Lys-133 and Lys-140. Residue Leu-147 coordinates GTP. Ser-162 bears the Phosphoserine mark. Lys-201 and Lys-228 each carry N6-acetyllysine. Mg(2+)-binding residues include Asn-244 and Asp-258. Lys-272 and Lys-292 each carry N6-acetyllysine. Asn-309 provides a ligand contact to substrate. An N6-succinyllysine modification is found at Lys-339. Lys-348 bears the N6-acetyllysine mark. 366-368 (GIV) is a substrate binding site. Residues Lys-387 and Lys-424 each carry the N6-acetyllysine modification.

It belongs to the succinate/malate CoA ligase beta subunit family. GTP-specific subunit beta subfamily. In terms of assembly, heterodimer of an alpha and a beta subunit. The beta subunit determines specificity for GTP. The cofactor is Mg(2+).

Its subcellular location is the mitochondrion. The enzyme catalyses GTP + succinate + CoA = succinyl-CoA + GDP + phosphate. It functions in the pathway carbohydrate metabolism; tricarboxylic acid cycle; succinate from succinyl-CoA (ligase route): step 1/1. Functionally, GTP-specific succinyl-CoA synthetase functions in the citric acid cycle (TCA), coupling the hydrolysis of succinyl-CoA to the synthesis of GTP and thus represents the only step of substrate-level phosphorylation in the TCA. The beta subunit provides nucleotide specificity of the enzyme and binds the substrate succinate, while the binding sites for coenzyme A and phosphate are found in the alpha subunit. The sequence is that of Succinate--CoA ligase [GDP-forming] subunit beta, mitochondrial from Sus scrofa (Pig).